A 161-amino-acid chain; its full sequence is Protein-export protein SecB (161 aa).

This sequence belongs to the SecB family. Homotetramer, a dimer of dimers. One homotetramer interacts with 1 SecA dimer.

The protein localises to the cytoplasm. Its function is as follows. One of the proteins required for the normal export of preproteins out of the cell cytoplasm. It is a molecular chaperone that binds to a subset of precursor proteins, maintaining them in a translocation-competent state. It also specifically binds to its receptor SecA. The sequence is that of Protein-export protein SecB from Shewanella baltica (strain OS223).